The following is a 139-amino-acid chain: Transcription antitermination protein NusB (139 aa).

This sequence belongs to the NusB family.

In terms of biological role, involved in transcription antitermination. Required for transcription of ribosomal RNA (rRNA) genes. Binds specifically to the boxA antiterminator sequence of the ribosomal RNA (rrn) operons. The chain is Transcription antitermination protein NusB from Nitratiruptor sp. (strain SB155-2).